We begin with the raw amino-acid sequence, 120 residues long: Protein RALF-like 1 (120 aa).

A signal peptide spans 1 to 26 (MDKSFTLFLTLTILVVFIISSPPVQA). Positions 27–71 (GFANDLGGVAWATTGDNGSGCHGSIAECIGAEEEEMDSEINRRIL) are cleaved as a propeptide — removed in mature form. Asn43 is a glycosylation site (N-linked (GlcNAc...) asparagine). 2 disulfide bridges follow: Cys89–Cys99 and Cys112–Cys118.

The protein belongs to the plant rapid alkalinization factor (RALF) family. In terms of assembly, interacts with FER and promotes its phosphorylation and subsequent activation. In terms of processing, proteolytically cleaved, probably by S1P, a subtilisin-like serine protease (subtilase). In terms of tissue distribution, expressed in roots and stems.

It is found in the secreted. Cell signaling peptide that may regulate plant stress, growth, and development. Mediates a rapid alkalinization of extracellular space by mediating a transient increase in the cytoplasmic Ca(2+) concentration leading to a calcium-dependent signaling events through a cell surface receptor and a concomitant activation of some intracellular mitogen-activated protein kinases. Mostly active in roots. Prevents plant growth (e.g. root and leaf length). Suppresses cell elongation of the primary root by activating the cell surface receptor FER and triggering phosphorylation of AHA2 and subsequent extracellular alkalinization. The chain is Protein RALF-like 1 (RALF1) from Arabidopsis thaliana (Mouse-ear cress).